A 122-amino-acid polypeptide reads, in one-letter code: Large ribosomal subunit protein uL18 (122 aa).

Over residues Met1–Arg19 the composition is skewed to basic residues. Residues Met1 to Arg27 form a disordered region.

The protein belongs to the universal ribosomal protein uL18 family. As to quaternary structure, part of the 50S ribosomal subunit; part of the 5S rRNA/L5/L18/L25 subcomplex. Contacts the 5S and 23S rRNAs.

Functionally, this is one of the proteins that bind and probably mediate the attachment of the 5S RNA into the large ribosomal subunit, where it forms part of the central protuberance. The protein is Large ribosomal subunit protein uL18 of Prochlorococcus marinus (strain NATL1A).